We begin with the raw amino-acid sequence, 114 residues long: DNA-directed RNA polymerases II, IV and V subunit 9B (114 aa).

Cys7, Cys10, Cys29, Cys32, Cys76, Cys79, Cys103, and Cys108 together coordinate Zn(2+). The TFIIS-type zinc-finger motif lies at 72–113 (KAVRCAKCQHGEAVFFQATARGEEGMTLFFVCCNPNCSHRWR).

It belongs to the archaeal RpoM/eukaryotic RPA12/RPB9/RPC11 RNA polymerase family. As to quaternary structure, component of the RNA polymerase II, IV and V complexes. Interacts with NRPD1.

It is found in the nucleus. The protein localises to the nucleolus. Its function is as follows. DNA-dependent RNA polymerase catalyzes the transcription of DNA into RNA using the four ribonucleoside triphosphates as substrates. Component of RNA polymerase II which synthesizes mRNA precursors and many functional non-coding RNAs. Pol II is the central component of the basal RNA polymerase II transcription machinery. It is composed of mobile elements that move relative to each other. Component of RNA polymerases IV and V which mediate short-interfering RNAs (siRNA) accumulation and subsequent RNA-directed DNA methylation-dependent (RdDM) transcriptional gene silencing (TGS) of endogenous repeated sequences, including transposable elements. Required for RNA silencing. This is DNA-directed RNA polymerases II, IV and V subunit 9B (NRPB9B) from Arabidopsis thaliana (Mouse-ear cress).